We begin with the raw amino-acid sequence, 527 residues long: Phosphoenolpyruvate carboxykinase (ATP) (527 aa).

Positions 55, 191, and 197 each coordinate substrate. ATP contacts are provided by residues Lys197, His216, and 232 to 240; that span reads GLSGTGKTT. Mn(2+)-binding residues include Lys197 and His216. A Mn(2+)-binding site is contributed by Asp253. Glu281, Arg318, and Thr443 together coordinate ATP. Residue Arg318 participates in substrate binding.

This sequence belongs to the phosphoenolpyruvate carboxykinase (ATP) family. Requires Mn(2+) as cofactor.

It localises to the cytoplasm. The enzyme catalyses oxaloacetate + ATP = phosphoenolpyruvate + ADP + CO2. Its pathway is carbohydrate biosynthesis; gluconeogenesis. Involved in the gluconeogenesis. Catalyzes the conversion of oxaloacetate (OAA) to phosphoenolpyruvate (PEP) through direct phosphoryl transfer between the nucleoside triphosphate and OAA. This is Phosphoenolpyruvate carboxykinase (ATP) from Brevibacillus brevis (strain 47 / JCM 6285 / NBRC 100599).